The chain runs to 261 residues: Lysosomal-associated transmembrane protein 5 (261 aa).

The next 5 helical transmembrane spans lie at 21 to 41, 65 to 85, 92 to 112, 133 to 153, and 183 to 203; these read TIALAIYHIVMSVLLFIEHVV, SSFLLIGVLFIISISLLFGVV, LIPFLSLQIMDFLLCLLTLLG, VPLMTLQLLDFCLSILTLCSS, and FINMMLIFSVAFITVLILKVY. A disordered region spans residues 242–261; it reads LSLPPKTPEGDPAPPPYSEV. The span at 246–261 shows a compositional bias: pro residues; it reads PKTPEGDPAPPPYSEV. At Tyr258 the chain carries Phosphotyrosine.

The protein belongs to the LAPTM4/LAPTM5 transporter family. In terms of assembly, binds to ubiquitin. In terms of tissue distribution, preferentially expressed in adult hematopoietic tissues. High levels in lymphoid and myeloid tissues.

Its subcellular location is the lysosome membrane. May have a special functional role during embryogenesis and in adult hematopoietic cells. The polypeptide is Lysosomal-associated transmembrane protein 5 (Laptm5) (Mus musculus (Mouse)).